Here is a 182-residue protein sequence, read N- to C-terminus: Fucoxanthin-chlorophyll a-c binding protein D, chloroplastic (182 aa).

The N-terminal 4 residues, 1–4, are a transit peptide targeting the chloroplast; it reads AMKM. A run of 3 helical transmembrane segments spans residues 46 to 66, 87 to 107, and 148 to 168; these read IAML…PGML, IPPG…LAVM, and GRAA…NNKP.

The protein belongs to the fucoxanthin chlorophyll protein family. In terms of assembly, the LHC complex of chromophytic algae is composed of fucoxanthin, chlorophyll A and C bound non-covalently by fucoxanthin chlorophyll proteins (FCPs). The ratio of pigments in this LHC is; fucoxanthin: chlorophyll C: chlorophyll A; (0.6-1): (0.1-0.3): (1).

The protein localises to the plastid. It is found in the chloroplast thylakoid membrane. Functionally, the light-harvesting complex (LHC) functions as a light receptor, it captures and delivers excitation energy to photosystems with which it is closely associated. Energy is transferred from the carotenoid and chlorophyll C (or B) to chlorophyll A and the photosynthetic reaction centers where it is used to synthesize ATP and reducing power. In Macrocystis pyrifera (Giant kelp), this protein is Fucoxanthin-chlorophyll a-c binding protein D, chloroplastic (FCPD).